The primary structure comprises 384 residues: Na(+)/H(+) antiporter NhaA (384 aa).

A run of 11 helical transmembrane segments spans residues 9–29 (NLET…IIIA), 58–78 (LLLW…GLEI), 94–114 (LVPA…FIFF), 124–144 (GWAI…SLLG), 153–173 (ILLT…IALF), 179–199 (SLLS…LNYF), 204–224 (ISVF…SGVH), 256–276 (VVFL…FVGL), 285–305 (VVLG…FLSL), 325–345 (VYGI…IGSL), and 357–377 (MVKI…FLVL).

The protein belongs to the NhaA Na(+)/H(+) (TC 2.A.33) antiporter family.

The protein localises to the cell inner membrane. It carries out the reaction Na(+)(in) + 2 H(+)(out) = Na(+)(out) + 2 H(+)(in). Functionally, na(+)/H(+) antiporter that extrudes sodium in exchange for external protons. The polypeptide is Na(+)/H(+) antiporter NhaA (Legionella pneumophila (strain Lens)).